The primary structure comprises 393 residues: Putative bacilysin exporter BacE (393 aa).

10 helical membrane passes run 11-31 (LLFG…ALLI), 43-63 (SGVI…GVLV), 69-89 (VKIM…LTFL), 92-112 (GEYP…GVFF), 133-155 (LFAK…FLLG), 160-177 (LAVA…FFIS), 215-235 (MFTM…FPIV), 244-264 (IGNF…AALV), 287-307 (ALFL…LFFI), and 353-373 (IVDA…LFLH).

This sequence belongs to the major facilitator superfamily.

It is found in the cell membrane. Its function is as follows. Part of the bacilysin biosynthesis operon. May be involved in self-resistance to bacilysin by permitting efflux of this antibiotic. The chain is Putative bacilysin exporter BacE (bacE) from Bacillus amyloliquefaciens (Bacillus velezensis).